We begin with the raw amino-acid sequence, 305 residues long: Oxidoreductase swnR (305 aa).

This sequence belongs to the NmrA-type oxidoreductase family. Isoflavone reductase subfamily.

The enzyme catalyses L-pipecolate + O2 = L-1-piperideine-6-carboxylate + H2O2 + H(+). It functions in the pathway mycotoxin biosynthesis. Its function is as follows. Oxidoreductase; part of the gene cluster that mediates the biosynthesis of swainsonine (SW), a cytotoxic fungal alkaloid and a potential cancer therapy drug. Swainsonine production occurs via a multibranched pathway and is dispensable for fungal colonization of plants and infection of insect hosts. The first step of swainsonine biosynthesis is the production of the precursor pipecolic acid (PA) via conversion of L-lysine (Lys) to 1-piperideine-6-carboxylate (P6C) by the aminotransferase swnA, the latter being further reduced to PA by the reductase swnR. PA can be converted from lysine by both the SW biosynthetic cluster and the unclustered genes such as lysine cyclodeaminase. The PKS-NRPS hybrid synthetase swnK uptakes and condensates PA and malonyl-CoA with and without skipping of the ketoreductase (KR) domain in order to produce 3 intermediates, 1-oxoindolizidine, (1S)-1-hydroxyindolizin, and (1R)-1-hydroxyindolizine; with the transisomer (1S)-1-hydroxyindolizin being predominant. The terminal thioester reductase (TE) domain of swnK is involved in reduction of the thioester bond to release the intermediate aldehydes. The oxidoreductase swnN could contribute to the reduction of 1-oxoindolizidine to (1S)-1-hydroxyindolizin and (1R)-1-hydroxyindolizine, contributing to the major route of SW production. The dioxygenase swnH2 would be responsible for the oxidization of (1R)-1-hydroxyindolizine into (1R,2S)-1,2-dihydroxyindolizine and of (1S)-1-hydroxyindolizin to yield both (1R,2S)-1,2-dihydroxyindolizine and (1S,2S)-1,2-dihydroxyindolizine. The dioxygenase swnH1 then performs the conversion of the 1,2-dihydroxyindolizine epimers to SW. This chain is Oxidoreductase swnR, found in Metarhizium robertsii (strain ARSEF 23 / ATCC MYA-3075) (Metarhizium anisopliae (strain ARSEF 23)).